Here is a 458-residue protein sequence, read N- to C-terminus: Hyaluronidase conohyal-P1 (458 aa).

An N-terminal signal peptide occupies residues 1 to 18 (MRVVVVVTGLVVVVVATA). Residues 24-47 (HDVKSASSPLSSSSVYQGSSGDDC) form a disordered region. A compositionally biased stretch (low complexity) spans 28 to 43 (SASSPLSSSSVYQGSS). The cysteines at positions 68 and 342 are disulfide-linked. 2 N-linked (GlcNAc...) asparagine glycosylation sites follow: Asn106 and Asn141. The active-site Proton donor is Glu151. Asn261, Asn337, and Asn359 each carry an N-linked (GlcNAc...) asparagine glycan. The EGF-like domain maps to 363-434 (VMADCSTTLC…VRPSRCHKQQ (72 aa)). 3 cysteine pairs are disulfide-bonded: Cys367–Cys378, Cys372–Cys411, and Cys413–Cys422.

The protein belongs to the glycosyl hydrolase 56 family. In terms of tissue distribution, expressed by the venom duct.

The protein resides in the secreted. The enzyme catalyses Random hydrolysis of (1-&gt;4)-linkages between N-acetyl-beta-D-glucosamine and D-glucuronate residues in hyaluronate.. Its function is as follows. Hyaluronidase catalyzes the hydrolysis of hyaluronic acid (HA), an anionic, nonsulfated glycosaminoglycan distributed widely throughout connective, epithelial, and neural tissues. In venom, they are known to enhance diffusion of the venom by degrading the extracellular matrix. The protein is Hyaluronidase conohyal-P1 of Conus purpurascens (Purple cone).